We begin with the raw amino-acid sequence, 248 residues long: Granulin (248 aa).

It belongs to the polyhedrin family.

In terms of biological role, component of the virus occlusion bodies, which are large proteinaceous structures, that protect the virus from the outside environment for extended periods until they are ingested by insect larvae. This chain is Granulin, found in Trichoplusia ni (Cabbage looper).